We begin with the raw amino-acid sequence, 570 residues long: MNMSLLQTPSLLMYNKMLKSLADGKSFTKVLALFGELRGQGLYPDNFTLPVVLKSIGRLRKVIEGEKVHGYAVKAGLEFDSYVSNSLMGMYASLGKIEITHKVFDEMPQRDVVSWNGLISSYVGNGRFEDAIGVFKRMSQESNLKFDEGTIVSTLSACSALKNLEIGERIYRFVVTEFEMSVRIGNALVDMFCKCGCLDKARAVFDSMRDKNVKCWTSMVFGYVSTGRIDEARVLFERSPVKDVVLWTAMMNGYVQFNRFDEALELFRCMQTAGIRPDNFVLVSLLTGCAQTGALEQGKWIHGYINENRVTVDKVVGTALVDMYAKCGCIETALEVFYEIKERDTASWTSLIYGLAMNGMSGRALDLYYEMENVGVRLDAITFVAVLTACNHGGFVAEGRKIFHSMTERHNVQPKSEHCSCLIDLLCRAGLLDEAEELIDKMRGESDETLVPVYCSLLSAARNYGNVKIAERVAEKLEKVEVSDSSAHTLLASVYASANRWEDVTNVRRKMKDLGIRKFPGCSSIEIDGVGHEFIVGDDLLSHPKMDEINSMLHQTTNLMLDLEHKEIDS.

13 PPR repeats span residues 10–44 (SLLM…GLYP), 45–79 (DNFT…GLEF), 80–110 (DSYV…MPQR), 111–141 (DVVS…MSQE), 147–177 (DEGT…VVTE), 181–215 (SVRI…NVKC), 216–242 (WTSM…SPVK), 243–277 (DVVL…GIRP), 278–312 (DNFV…RVTV), 313–343 (DKVV…IKER), 344–378 (DTAS…GVRL), 379–414 (DAIT…NVQP), and 415–449 (KSEH…SDET). The interval 453–528 (VYCSLLSAAR…FPGCSSIEID (76 aa)) is type E motif. The interval 529-561 (GVGHEFIVGDDLLSHPKMDEINSMLHQTTNLML) is type E(+) motif.

The protein belongs to the PPR family. PCMP-E subfamily.

The protein is Pentatricopeptide repeat-containing protein At1g31430 (PCMP-E55) of Arabidopsis thaliana (Mouse-ear cress).